Consider the following 590-residue polypeptide: uncharacterized protein (590 aa).

Over 1-68 (MKFSKPKFSM…SQRVWGPWNY (68 aa)) the chain is Cytoplasmic. A helical transmembrane segment spans residues 69–89 (VAFWLADSVNVNTWMIAGTAV). Topologically, residues 90-94 (ESGLS) are extracellular. A helical membrane pass occupies residues 95–115 (WWEAWITVWVGYTIAAFILTI). The Cytoplasmic portion of the chain corresponds to 116 to 124 (AGRAGAVYH). A helical transmembrane segment spans residues 125–145 (ISFPVLSRSSFGIWGSLWPIL). The Extracellular segment spans residues 146-149 (NRAV). A helical membrane pass occupies residues 150–170 (MACVWYGVQAWIGGECVTLMI). The Cytoplasmic segment spans residues 171–194 (RSIWPSFSHIPNTMAKSGTETYQW). The chain crosses the membrane as a helical span at residues 195–215 (VGFFIFWLISNVAIWFPVYQI). Residues 216-218 (RHL) lie on the Extracellular side of the membrane. The helical transmembrane segment at 219–239 (FTAKSFLAPPAAIAFLIWALV) threads the bilayer. Over 240-258 (KAHGAGDAIHAKTQLSTWN) the chain is Cytoplasmic. Residues 259–279 (HGWAVTAGIISCLDNFATLIV) traverse the membrane as a helical segment. Residues 280–298 (NNPDFTRFATTPNAPIFPQ) are Extracellular-facing. A helical membrane pass occupies residues 299–319 (LITIPMGFGITTLIGVLVGSA). Residues 320–390 (SKSIYGENIW…LCPMFINIRR (71 aa)) are Cytoplasmic-facing. A helical transmembrane segment spans residues 391-411 (GGYIASIIGICMCPWNLLSSS). Residues 412-418 (NSFANSL) lie on the Extracellular side of the membrane. The helical transmembrane segment at 419 to 439 (SAYAVFLSSFAGILIADYFVI) threads the bilayer. Residues 440 to 467 (RKGYLKVDALYTINPNEPYWFTYGINLR) are Cytoplasmic-facing. A helical transmembrane segment spans residues 468–488 (AFASYICGLLINVVGLAGAVG). Residues 489 to 500 (DKVPKAALTMNN) lie on the Extracellular side of the membrane. Residues 501–521 (IAYLLGIVTSFLSHLIICKIF) form a helical membrane-spanning segment. At 522 to 590 (PVTACGEKFL…GIDIKESSVF (69 aa)) the chain is on the cytoplasmic side. The tract at residues 566-590 (VSYDSKEKSDDGKSGGIDIKESSVF) is disordered.

It belongs to the purine-cytosine permease (2.A.39) family.

The protein resides in the cytoplasm. The protein localises to the nucleus. It localises to the membrane. This is an uncharacterized protein from Schizosaccharomyces pombe (strain 972 / ATCC 24843) (Fission yeast).